Reading from the N-terminus, the 379-residue chain is Cobalt-precorrin-5B C(1)-methyltransferase (379 aa).

It belongs to the CbiD family.

It carries out the reaction Co-precorrin-5B + S-adenosyl-L-methionine = Co-precorrin-6A + S-adenosyl-L-homocysteine. It functions in the pathway cofactor biosynthesis; adenosylcobalamin biosynthesis; cob(II)yrinate a,c-diamide from sirohydrochlorin (anaerobic route): step 6/10. In terms of biological role, catalyzes the methylation of C-1 in cobalt-precorrin-5B to form cobalt-precorrin-6A. This is Cobalt-precorrin-5B C(1)-methyltransferase from Salmonella typhi.